We begin with the raw amino-acid sequence, 411 residues long: Pyruvate dehydrogenase E1 component subunit alpha, mitochondrial (411 aa).

The transit peptide at 1–29 (MFSRAVRLSRAALPIRVASQRVPIAARRS) directs the protein to the mitochondrion. Positions 111, 137, 138, 184, 186, 215, 216, 217, 244, and 246 each coordinate pyruvate. Thiamine diphosphate is bound by residues Y137, R138, G184, V186, D215, G216, A217, and N244. Position 215 (D215) interacts with Mg(2+). Mg(2+) contacts are provided by N244 and Y246. Residue H311 participates in thiamine diphosphate binding.

In terms of assembly, eukaryotic pyruvate dehydrogenase (PDH) complexes are organized as a core consisting of the oligomeric dihydrolipoamide acetyl-transferase (E2), around which are arranged multiple copies of pyruvate dehydrogenase (E1), dihydrolipoamide dehydrogenase (E3) and protein X (E3BP) bound by non-covalent bonds. The Chaetomium thermophilum PDH complex contains 60 E2 units, 12 E3BP units, about 20 E1 units, and 12 or more E3 units. The units are organized in 1 E2 60-mer, 4 E3BP trimers, about 20 E1 tetramers, and a maximum of 12 E3 dimers. Pyruvate dehydrogenase (E1) is active as a tetramer of 2 alpha and 2 beta subunits. The E3BP trimers are bound inside the icosahedral core with tetrahedral symmetry. The cofactor is thiamine diphosphate. Requires Mg(2+) as cofactor.

It is found in the mitochondrion. The catalysed reaction is N(6)-[(R)-lipoyl]-L-lysyl-[protein] + pyruvate + H(+) = N(6)-[(R)-S(8)-acetyldihydrolipoyl]-L-lysyl-[protein] + CO2. Functionally, the 10-megadalton pyruvate dehydrogenase complex contains multiple copies of three enzymatic components: pyruvate dehydrogenase (E1), dihydrolipoamide acetyltransferase (E2) and lipoamide dehydrogenase (E3) and catalyzes the overall oxidative decarboxylation of pyruvate to form acetyl-CoA and CO(2). Within the complex, pyruvate and thiamine pyrophosphate (TPP or vitamin B1) are bound by pyruvate dehydrogenase E1 subunits alpha and beta and pyruvate is decarboxylated leading to the 2-carbon hydrohyethyl bound to TPP. The E2 component contains covalently-bound lipoyl cofactors and transfers the hydroxyethyl group from TPP to an oxidized form of covalently bound lipoamide, and the resulting acetyl group is then transferred to free coenzyme A to form acetyl-CoA and reduced dihydrolipoamide-E2. Finally, the flavoprotein dihydrolipoamide dehydrogenase (E3) re-oxidizes the lipoyl group of dihydrolipoamide-E2 to form lipoamide-E2 and NADH. A fourth subunit, E3BP, is responsible for tethering E3 in proximity to the core, forming the entire metabolon. The polypeptide is Pyruvate dehydrogenase E1 component subunit alpha, mitochondrial (Chaetomium thermophilum (strain DSM 1495 / CBS 144.50 / IMI 039719) (Thermochaetoides thermophila)).